The primary structure comprises 1058 residues: Receptor-type guanylate cyclase gcy-22 (1058 aa).

The N-terminal stretch at 1–23 is a signal peptide; sequence MSFISKCFICLLFSTYFLPPVNS. Over 25 to 470 the chain is Extracellular; the sequence is VLQVGFLAAN…PKSFTDQYLA (446 aa). 9 N-linked (GlcNAc...) asparagine glycosylation sites follow: N36, N73, N201, N215, N277, N302, N324, N350, and N386. The helical transmembrane segment at 471–491 threads the bilayer; that stretch reads IILGCTAAALVLIIAVISTIV. At 492–1058 the chain is on the cytoplasmic side; sequence FLVRSKRQEE…IEAKENGESI (567 aa). In terms of domain architecture, Protein kinase spans 501–809; sequence EERLNQLWQV…SSNLMDHVFN (309 aa). Positions 811–840 form a coiled coil; the sequence is LEQYASNLEDEVQARMKELTEEKKRSDVLL. The Guanylate cyclase domain maps to 867–997; that stretch reads TIFFSDVVSF…DSVNTASRME (131 aa).

The protein belongs to the adenylyl cyclase class-4/guanylyl cyclase family. Expression in ASER neuron begins at an early larval stage and is maintained in the adult.

The protein localises to the cell membrane. It carries out the reaction GTP = 3',5'-cyclic GMP + diphosphate. Functionally, guanylate cyclase involved in the production of the second messenger cGMP. Regulates chemotaxis responses toward Li(1-), Mg(2+), Cl(1-), Br(1)- and I(1-) salt ions and methionine in ASE right (ASER) sensory neuron. May regulate ASER neuronal activity such as axon sprouting and calcium responses to changes in salt concentrations. The sequence is that of Receptor-type guanylate cyclase gcy-22 from Caenorhabditis elegans.